Here is a 313-residue protein sequence, read N- to C-terminus: Homoserine O-succinyltransferase (313 aa).

The active-site Acyl-thioester intermediate is Cys-142. Substrate contacts are provided by Lys-163 and Ser-192. The active-site Proton acceptor is His-235. Glu-237 is an active-site residue. Residue Arg-249 coordinates substrate.

The protein belongs to the MetA family.

It is found in the cytoplasm. It catalyses the reaction L-homoserine + succinyl-CoA = O-succinyl-L-homoserine + CoA. Its pathway is amino-acid biosynthesis; L-methionine biosynthesis via de novo pathway; O-succinyl-L-homoserine from L-homoserine: step 1/1. In terms of biological role, transfers a succinyl group from succinyl-CoA to L-homoserine, forming succinyl-L-homoserine. This Vibrio parahaemolyticus serotype O3:K6 (strain RIMD 2210633) protein is Homoserine O-succinyltransferase.